Consider the following 211-residue polypeptide: Small ribosomal subunit protein eS1 (211 aa).

Belongs to the eukaryotic ribosomal protein eS1 family.

This chain is Small ribosomal subunit protein eS1, found in Methanothrix thermoacetophila (strain DSM 6194 / JCM 14653 / NBRC 101360 / PT) (Methanosaeta thermophila).